Consider the following 284-residue polypeptide: tRNA (guanine-N(7)-)-methyltransferase (284 aa).

S-adenosyl-L-methionine is bound by residues glycine 102, 125 to 126 (EI), 160 to 161 (NT), and cysteine 180. Aspartate 183 is a catalytic residue. 258 to 260 (TEE) is a binding site for S-adenosyl-L-methionine.

The protein belongs to the class I-like SAM-binding methyltransferase superfamily. TrmB family. In terms of assembly, forms a complex with TRM82.

The protein resides in the nucleus. It catalyses the reaction guanosine(46) in tRNA + S-adenosyl-L-methionine = N(7)-methylguanosine(46) in tRNA + S-adenosyl-L-homocysteine. Its pathway is tRNA modification; N(7)-methylguanine-tRNA biosynthesis. Catalyzes the formation of N(7)-methylguanine at position 46 (m7G46) in tRNA. This Podospora anserina (strain S / ATCC MYA-4624 / DSM 980 / FGSC 10383) (Pleurage anserina) protein is tRNA (guanine-N(7)-)-methyltransferase.